The following is a 252-amino-acid chain: 5-oxoprolinase subunit A (252 aa).

The protein belongs to the LamB/PxpA family. In terms of assembly, forms a complex composed of PxpA, PxpB and PxpC.

The catalysed reaction is 5-oxo-L-proline + ATP + 2 H2O = L-glutamate + ADP + phosphate + H(+). Functionally, catalyzes the cleavage of 5-oxoproline to form L-glutamate coupled to the hydrolysis of ATP to ADP and inorganic phosphate. The chain is 5-oxoprolinase subunit A from Corynebacterium glutamicum (strain R).